The primary structure comprises 324 residues: MTIRAVVRGVGHYLPARVVENAEFEGKLDTTDEWIRSRTGIERRHFAAEGETTSQLAIKAAAAALADAGLSAADIDAIVVATSTPDFTFPSVATMVQAGLGNTNAFAFDVQAVCAGFVFALANANGMILSGQAKRVLVIGAETFSRIMDWADRGTCVLFGDGAGAVILEAAEGAGTAADRGILASDLHSDGRYRELLYVDGGVSTNGQSGHLRMQGNAVFKHAVQKLAETAHAALAKAGLTPEDVSWIVPHQANLRIITATAERMGVPMERVVVTVADHGNTSAASIPLALSTARARGQIKAGDLIVTEAIGGGLAWGSVVLRW.

Catalysis depends on residues Cys114 and His251. Residues 252 to 256 are ACP-binding; it reads QANLR. Residue Asn281 is part of the active site.

The protein belongs to the thiolase-like superfamily. FabH family. Homodimer.

It is found in the cytoplasm. The enzyme catalyses malonyl-[ACP] + acetyl-CoA + H(+) = 3-oxobutanoyl-[ACP] + CO2 + CoA. It participates in lipid metabolism; fatty acid biosynthesis. Catalyzes the condensation reaction of fatty acid synthesis by the addition to an acyl acceptor of two carbons from malonyl-ACP. Catalyzes the first condensation reaction which initiates fatty acid synthesis and may therefore play a role in governing the total rate of fatty acid production. Possesses both acetoacetyl-ACP synthase and acetyl transacylase activities. Its substrate specificity determines the biosynthesis of branched-chain and/or straight-chain of fatty acids. The protein is Beta-ketoacyl-[acyl-carrier-protein] synthase III of Rhodobacter capsulatus (Rhodopseudomonas capsulata).